A 140-amino-acid polypeptide reads, in one-letter code: Putative transcription elongation factor S-II-like protein 349L (140 aa).

The TFIIS-type zinc finger occupies 100–139 (GAIKCKCGSERVFSFSKQTRSGDESTSVFALCSSCKSKWV). Zn(2+) is bound by residues cysteine 104, cysteine 106, cysteine 131, and cysteine 134.

The protein belongs to the IIV-6 349L family.

The protein is Putative transcription elongation factor S-II-like protein 349L of Acheta domesticus (House cricket).